Consider the following 116-residue polypeptide: Large ribosomal subunit protein bL17 (116 aa).

The protein belongs to the bacterial ribosomal protein bL17 family. Part of the 50S ribosomal subunit. Contacts protein L32.

This Helicobacter pylori (strain P12) protein is Large ribosomal subunit protein bL17.